We begin with the raw amino-acid sequence, 366 residues long: GTP cyclohydrolase 1 type 2 homolog (366 aa).

Residues His64, His65, Asp102, His326, and Glu329 each contribute to the Zn(2+) site.

The protein belongs to the GTP cyclohydrolase I type 2/NIF3 family. As to quaternary structure, homohexamer.

This chain is GTP cyclohydrolase 1 type 2 homolog, found in Staphylococcus aureus (strain MRSA252).